The primary structure comprises 151 residues: Deoxyuridine 5'-triphosphate nucleotidohydrolase (151 aa).

Substrate is bound by residues 70–72 (RSG), asparagine 83, 87–89 (LID), and methionine 97.

The protein belongs to the dUTPase family. Requires Mg(2+) as cofactor.

The catalysed reaction is dUTP + H2O = dUMP + diphosphate + H(+). It functions in the pathway pyrimidine metabolism; dUMP biosynthesis; dUMP from dCTP (dUTP route): step 2/2. Its function is as follows. This enzyme is involved in nucleotide metabolism: it produces dUMP, the immediate precursor of thymidine nucleotides and it decreases the intracellular concentration of dUTP so that uracil cannot be incorporated into DNA. In Shigella flexneri serotype 5b (strain 8401), this protein is Deoxyuridine 5'-triphosphate nucleotidohydrolase.